The chain runs to 203 residues: Transmembrane protein 269 (203 aa).

The next 3 membrane-spanning stretches (helical) occupy residues 60–80, 124–144, and 157–177; these read GLAS…LAII, FILC…SYYP, and LVYI…SAFY.

The protein localises to the membrane. This chain is Transmembrane protein 269, found in Homo sapiens (Human).